A 196-amino-acid polypeptide reads, in one-letter code: Peptidyl-tRNA hydrolase (196 aa).

TRNA is bound at residue Tyr-14. Residue His-19 is the Proton acceptor of the active site. Phe-64, Asn-66, and Asn-112 together coordinate tRNA.

The protein belongs to the PTH family. In terms of assembly, monomer.

The protein resides in the cytoplasm. It carries out the reaction an N-acyl-L-alpha-aminoacyl-tRNA + H2O = an N-acyl-L-amino acid + a tRNA + H(+). In terms of biological role, hydrolyzes ribosome-free peptidyl-tRNAs (with 1 or more amino acids incorporated), which drop off the ribosome during protein synthesis, or as a result of ribosome stalling. Its function is as follows. Catalyzes the release of premature peptidyl moieties from peptidyl-tRNA molecules trapped in stalled 50S ribosomal subunits, and thus maintains levels of free tRNAs and 50S ribosomes. The polypeptide is Peptidyl-tRNA hydrolase (Solibacter usitatus (strain Ellin6076)).